We begin with the raw amino-acid sequence, 1091 residues long: ATP-dependent helicase/deoxyribonuclease subunit B (1091 aa).

This sequence belongs to the helicase family. AddB/RexB type 2 subfamily. As to quaternary structure, heterodimer of AddA and RexB. Mg(2+) serves as cofactor.

Its function is as follows. The heterodimer acts as both an ATP-dependent DNA helicase and an ATP-dependent, dual-direction single-stranded exonuclease. Recognizes the chi site generating a DNA molecule suitable for the initiation of homologous recombination. This subunit has 5' -&gt; 3' nuclease activity but not helicase activity. This Streptococcus pneumoniae (strain Hungary19A-6) protein is ATP-dependent helicase/deoxyribonuclease subunit B.